The chain runs to 624 residues: Serine/threonine-protein kinase ppk35 (624 aa).

In terms of domain architecture, Protein kinase spans 162-465 (FDLLVKLGQG…TIEIQKHPFF (304 aa)). Residues 168 to 176 (LGQGGYGSV) and Lys191 each bind ATP. Residue Asp285 is the Proton acceptor of the active site. Residues 466–548 (KRLHWNGLRK…KYRPNARKPL (83 aa)) enclose the AGC-kinase C-terminal domain. Basic residues predominate over residues 545–559 (RKPLVGRHREKRQLR). Positions 545-617 (RKPLVGRHRE…VHRLLERKGK (73 aa)) are disordered. Over residues 560-574 (KEKPEKKNNSTKQKD) the composition is skewed to basic and acidic residues. Positions 596–609 (SKTKGHKTKSSRVH) are enriched in basic residues.

This sequence belongs to the protein kinase superfamily. Ser/Thr protein kinase family.

It is found in the cytoplasm. Its subcellular location is the nucleus. The protein resides in the nucleolus. The enzyme catalyses L-seryl-[protein] + ATP = O-phospho-L-seryl-[protein] + ADP + H(+). The catalysed reaction is L-threonyl-[protein] + ATP = O-phospho-L-threonyl-[protein] + ADP + H(+). Functionally, has a role in meiosis. In Schizosaccharomyces pombe (strain 972 / ATCC 24843) (Fission yeast), this protein is Serine/threonine-protein kinase ppk35 (ppk35).